A 1028-amino-acid chain; its full sequence is Beta-galactosidase (1028 aa).

Positions 104 and 203 each coordinate substrate. A Na(+)-binding site is contributed by D203. Residues E418, H420, and E463 each contribute to the Mg(2+) site. Substrate-binding positions include E463 and 539-542 (EYAH). Residue E463 is the Proton donor of the active site. Catalysis depends on E539, which acts as the Nucleophile. N599 is a binding site for Mg(2+). Residues F603 and N606 each coordinate Na(+). Residues N606 and W1004 each contribute to the substrate site.

This sequence belongs to the glycosyl hydrolase 2 family. In terms of assembly, homodimer. The cofactor is Mg(2+). Requires Mn(2+) as cofactor. It depends on Fe cation as a cofactor. Na(+) serves as cofactor. K(+) is required as a cofactor.

It catalyses the reaction Hydrolysis of terminal non-reducing beta-D-galactose residues in beta-D-galactosides.. Its activity is regulated as follows. Completely inhibited by Hg(2+), Cu(2+) Ag(2+), and partially inhibited by Zn(2+), imidazole and EDTA. Activated by Ca(2+), Co(2+), Ni(2+). This beta-galactosidase is also able to catalyze glycosyl transfer to a series of acceptors, including hexose, pentose, beta- or alpha-disaccharides, hexahydroxy alcohol, cyclitol, and aromatic glycosides, resulting in the production of galacto-oligosaccharides (GOS). This is Beta-galactosidase (lacZ) from Enterobacter agglomerans (Erwinia herbicola).